We begin with the raw amino-acid sequence, 264 residues long: S-adenosylmethionine decarboxylase proenzyme (264 aa).

Serine 112 functions as the Schiff-base intermediate with substrate; via pyruvic acid in the catalytic mechanism. Serine 112 carries the post-translational modification Pyruvic acid (Ser); by autocatalysis. Catalysis depends on histidine 117, which acts as the Proton acceptor; for processing activity. Residue cysteine 140 is the Proton donor; for catalytic activity of the active site.

It belongs to the prokaryotic AdoMetDC family. Type 2 subfamily. In terms of assembly, heterooctamer of four alpha and four beta chains arranged as a tetramer of alpha/beta heterodimers. The cofactor is pyruvate. Is synthesized initially as an inactive proenzyme. Formation of the active enzyme involves a self-maturation process in which the active site pyruvoyl group is generated from an internal serine residue via an autocatalytic post-translational modification. Two non-identical subunits are generated from the proenzyme in this reaction, and the pyruvate is formed at the N-terminus of the alpha chain, which is derived from the carboxyl end of the proenzyme. The post-translation cleavage follows an unusual pathway, termed non-hydrolytic serinolysis, in which the side chain hydroxyl group of the serine supplies its oxygen atom to form the C-terminus of the beta chain, while the remainder of the serine residue undergoes an oxidative deamination to produce ammonia and the pyruvoyl group blocking the N-terminus of the alpha chain.

It carries out the reaction S-adenosyl-L-methionine + H(+) = S-adenosyl 3-(methylsulfanyl)propylamine + CO2. It participates in amine and polyamine biosynthesis; S-adenosylmethioninamine biosynthesis; S-adenosylmethioninamine from S-adenosyl-L-methionine: step 1/1. In terms of biological role, catalyzes the decarboxylation of S-adenosylmethionine to S-adenosylmethioninamine (dcAdoMet), the propylamine donor required for the synthesis of the polyamines spermine and spermidine from the diamine putrescine. The sequence is that of S-adenosylmethionine decarboxylase proenzyme from Photorhabdus laumondii subsp. laumondii (strain DSM 15139 / CIP 105565 / TT01) (Photorhabdus luminescens subsp. laumondii).